We begin with the raw amino-acid sequence, 108 residues long: Nucleoid-associated protein GK0018 (108 aa).

Positions 1 to 32 are disordered; the sequence is MMRGGMGNMQKMLKQMQKMQKEMQKAQEELAE. Residues 9–18 show a composition bias toward low complexity; that stretch reads MQKMLKQMQK. The span at 19 to 32 shows a compositional bias: basic and acidic residues; sequence MQKEMQKAQEELAE.

It belongs to the YbaB/EbfC family. As to quaternary structure, homodimer.

It is found in the cytoplasm. It localises to the nucleoid. Its function is as follows. Binds to DNA and alters its conformation. May be involved in regulation of gene expression, nucleoid organization and DNA protection. The chain is Nucleoid-associated protein GK0018 from Geobacillus kaustophilus (strain HTA426).